The sequence spans 136 residues: MMWWAVWCAAMVAGSVFTAAAPPTDSIDLMQMDPSLADDESLGFAMQSLSGRYAAAPWLYLLADVSHDPQNGSDRVKRRMPSLSIDMPMSVLRQKLSLENERKLQSLRAMANRNFLNDIGKRGFHWAPSAKAAKFY.

The signal sequence occupies residues Met-1–Ser-26. The propeptide occupies Ile-27–Val-76. Ile-119 bears the Isoleucine amide mark. A propeptide spanning residues Gly-123–Tyr-136 is cleaved from the precursor.

The protein belongs to the sauvagine/corticotropin-releasing factor/urotensin I family.

Its subcellular location is the secreted. Functionally, regulation of fluid secretion. The protein is Diuretic hormone 41 (dh41) of Bombyx mori (Silk moth).